A 284-amino-acid polypeptide reads, in one-letter code: Tripartite motif-containing protein 12A (284 aa).

Residues 15 to 59 (CPVCLNLMVKPVSADCGHTFCQGCITLYFESIKCDKKVFICPVCR) form an RING-type zinc finger. The B box-type zinc finger occupies 91–132 (QKVFNCARHGKKLQLFCRKDMMAICWLCERSQEHRGHKTALI). C96, H99, C118, and H124 together coordinate Zn(2+). Positions 130 to 234 (ALIEEVAQEY…QSKLLEDFIS (105 aa)) form a coiled coil.

It belongs to the TRIM/RBCC family. Expressed in embryonic CNS, liver, kidney, olfactory epithelium.

It is found in the cytoplasm. The protein is Tripartite motif-containing protein 12A (Trim12a) of Mus musculus (Mouse).